The following is a 614-amino-acid chain: DNA mismatch repair protein MutL (614 aa).

This sequence belongs to the DNA mismatch repair MutL/HexB family.

This protein is involved in the repair of mismatches in DNA. It is required for dam-dependent methyl-directed DNA mismatch repair. May act as a 'molecular matchmaker', a protein that promotes the formation of a stable complex between two or more DNA-binding proteins in an ATP-dependent manner without itself being part of a final effector complex. This is DNA mismatch repair protein MutL from Leptospira biflexa serovar Patoc (strain Patoc 1 / ATCC 23582 / Paris).